The following is a 241-amino-acid chain: Probable transcriptional regulatory protein CV_3123 (241 aa).

Belongs to the TACO1 family.

The protein resides in the cytoplasm. In Chromobacterium violaceum (strain ATCC 12472 / DSM 30191 / JCM 1249 / CCUG 213 / NBRC 12614 / NCIMB 9131 / NCTC 9757 / MK), this protein is Probable transcriptional regulatory protein CV_3123.